Here is a 20-residue protein sequence, read N- to C-terminus: Protein PR-L3 (20 aa).

Belongs to the BetVI family.

The polypeptide is Protein PR-L3 (Lupinus luteus (European yellow lupine)).